The sequence spans 584 residues: HERV-H_2q24.3 provirus ancestral Env polyprotein (584 aa).

An N-terminal signal peptide occupies residues 1 to 35 (MIFAGKAPSNTSTLMKFYSLLLYSLLFSFPFLCHP). The Extracellular segment spans residues 36–523 (LPLPSYLHHT…WALSNWMSWV (488 aa)). An N-linked (GlcNAc...) asparagine glycan is attached at Asn-47. The CXXC motif lies at 64–67 (CWLC). N-linked (GlcNAc...) asparagine glycans are attached at residues Asn-199, Asn-222, Asn-265, Asn-283, Asn-352, and Asn-370. The segment at 388–408 (VIPLIPLMVGLGLSASTVALG) is fusion peptide. The CKS-17 signature appears at 454 to 470 (LQNRRGLDLLTAEKGGL). Cys-471 and Cys-478 are disulfide-bonded. The CX6CC signature appears at 471–479 (CIFLNEECC). An N-linked (GlcNAc...) asparagine glycan is attached at Asn-483. Residues 524-544 (LPIVSPLIPIFLLLLFGPCIF) traverse the membrane as a helical segment. Over 545 to 584 (RLVSQFIQNRIQAITNHSIRQMFLLTSPQYHPLPQDLPSA) the chain is Cytoplasmic.

It belongs to the gamma type-C retroviral envelope protein family. HERV class-I H env subfamily. The surface (SU) and transmembrane (TM) proteins form a heterodimer. SU and TM are attached by noncovalent interactions or by a labile interchain disulfide bond. Specific enzymatic cleavages in vivo yield the mature SU and TM proteins. In terms of processing, the CXXC motif is highly conserved across a broad range of retroviral envelope proteins. It is thought to participate in the formation of a labile disulfide bond possibly with the CX6CC motif present in the transmembrane protein. Isomerization of the intersubunit disulfide bond to an SU intrachain disulfide bond is thought to occur upon receptor recognition in order to allow membrane fusion. Low expression in skin and testis. No expression in several cell lines.

The protein resides in the virion. It localises to the cell membrane. In terms of biological role, retroviral envelope proteins mediate receptor recognition and membrane fusion during early infection. Endogenous envelope proteins may have kept, lost or modified their original function during evolution. This endogenous envelope protein has lost its original fusogenic properties but has immunosuppressive properties in vivo. Functionally, SU mediates receptor recognition. Its function is as follows. TM anchors the envelope heterodimer to the viral membrane through one transmembrane domain. The other hydrophobic domain, called fusion peptide, mediates fusion of the viral membrane with the target cell membrane. The polypeptide is HERV-H_2q24.3 provirus ancestral Env polyprotein (Homo sapiens (Human)).